We begin with the raw amino-acid sequence, 338 residues long: Nicotinate-nucleotide--dimethylbenzimidazole phosphoribosyltransferase (338 aa).

Glutamate 305 serves as the catalytic Proton acceptor.

The protein belongs to the CobT family.

It carries out the reaction 5,6-dimethylbenzimidazole + nicotinate beta-D-ribonucleotide = alpha-ribazole 5'-phosphate + nicotinate + H(+). The protein operates within nucleoside biosynthesis; alpha-ribazole biosynthesis; alpha-ribazole from 5,6-dimethylbenzimidazole: step 1/2. Its function is as follows. Catalyzes the synthesis of alpha-ribazole-5'-phosphate from nicotinate mononucleotide (NAMN) and 5,6-dimethylbenzimidazole (DMB). The chain is Nicotinate-nucleotide--dimethylbenzimidazole phosphoribosyltransferase from Rhizobium etli (strain ATCC 51251 / DSM 11541 / JCM 21823 / NBRC 15573 / CFN 42).